Consider the following 495-residue polypeptide: Glycerol kinase (495 aa).

Thr-11 provides a ligand contact to ADP. ATP contacts are provided by Thr-11, Thr-12, and Ser-13. Thr-11 provides a ligand contact to sn-glycerol 3-phosphate. Position 15 (Arg-15) interacts with ADP. Positions 81, 82, 133, and 242 each coordinate sn-glycerol 3-phosphate. The glycerol site is built by Arg-81, Glu-82, Tyr-133, Asp-242, and Gln-243. Residues Thr-264 and Gly-307 each coordinate ADP. Thr-264, Gly-307, Gln-311, and Gly-409 together coordinate ATP. Residues Gly-409 and Asn-413 each contribute to the ADP site.

Belongs to the FGGY kinase family.

It catalyses the reaction glycerol + ATP = sn-glycerol 3-phosphate + ADP + H(+). It functions in the pathway polyol metabolism; glycerol degradation via glycerol kinase pathway; sn-glycerol 3-phosphate from glycerol: step 1/1. With respect to regulation, inhibited by fructose 1,6-bisphosphate (FBP). Key enzyme in the regulation of glycerol uptake and metabolism. Catalyzes the phosphorylation of glycerol to yield sn-glycerol 3-phosphate. This is Glycerol kinase from Borrelia hermsii (strain HS1 / DAH).